A 432-amino-acid polypeptide reads, in one-letter code: Acetylserotonin O-methyltransferase (432 aa).

Residues tyrosine 146, tryptophan 163, aspartate 209, 235–237, and arginine 252 each bind S-adenosyl-L-methionine; that span reads GDF. Histidine 255 acts as the Proton donor/acceptor in catalysis. Substrate is bound by residues aspartate 256, asparagine 302, and glutamine 306. Positions 373-432 are disordered; sequence VPGARSDAAGTGSGTGNTGSGIMLQGETLESEVSAPQAGSDVGGAGNEPRSGTLKQGDWK.

This sequence belongs to the class I-like SAM-binding methyltransferase superfamily. Cation-independent O-methyltransferase family. Homodimer. As to expression, expressed predominantly in the pineal gland (at protein level). Very low expression, if any, in the retina.

The catalysed reaction is N-acetylserotonin + S-adenosyl-L-methionine = melatonin + S-adenosyl-L-homocysteine + H(+). Its pathway is aromatic compound metabolism; melatonin biosynthesis; melatonin from serotonin: step 1/2. Its function is as follows. Catalyzes the transfer of a methyl group onto N-acetylserotonin, producing melatonin (N-acetyl-5-methoxytryptamine). The polypeptide is Acetylserotonin O-methyltransferase (Asmt) (Rattus norvegicus (Rat)).